A 642-amino-acid chain; its full sequence is Threonine--tRNA ligase (642 aa).

A TGS domain is found at 1–61 (MPVITLPDGS…ENDATLAIIT (61 aa)). Residues 243-534 (DHRKIGKQLD…LTEEFAGFFP (292 aa)) form a catalytic region. The Zn(2+) site is built by Cys-334, His-385, and His-511.

Belongs to the class-II aminoacyl-tRNA synthetase family. In terms of assembly, homodimer. Zn(2+) is required as a cofactor.

Its subcellular location is the cytoplasm. The enzyme catalyses tRNA(Thr) + L-threonine + ATP = L-threonyl-tRNA(Thr) + AMP + diphosphate + H(+). Its function is as follows. Catalyzes the attachment of threonine to tRNA(Thr) in a two-step reaction: L-threonine is first activated by ATP to form Thr-AMP and then transferred to the acceptor end of tRNA(Thr). Also edits incorrectly charged L-seryl-tRNA(Thr). The sequence is that of Threonine--tRNA ligase from Salmonella gallinarum (strain 287/91 / NCTC 13346).